The following is a 158-amino-acid chain: Arginine repressor (158 aa).

This sequence belongs to the ArgR family.

The protein localises to the cytoplasm. The protein operates within amino-acid biosynthesis; L-arginine biosynthesis [regulation]. Functionally, regulates arginine biosynthesis genes. This is Arginine repressor from Phocaeicola vulgatus (strain ATCC 8482 / DSM 1447 / JCM 5826 / CCUG 4940 / NBRC 14291 / NCTC 11154) (Bacteroides vulgatus).